The sequence spans 295 residues: Methionine aminopeptidase (295 aa).

Histidine 62 is a binding site for substrate. The a divalent metal cation site is built by aspartate 82, aspartate 93, and histidine 153. Histidine 161 contacts substrate. Glutamate 187 and glutamate 280 together coordinate a divalent metal cation.

This sequence belongs to the peptidase M24A family. Methionine aminopeptidase archaeal type 2 subfamily. Monomer. Co(2+) is required as a cofactor. The cofactor is Zn(2+). Mn(2+) serves as cofactor. It depends on Fe(2+) as a cofactor.

The enzyme catalyses Release of N-terminal amino acids, preferentially methionine, from peptides and arylamides.. In terms of biological role, removes the N-terminal methionine from nascent proteins. The N-terminal methionine is often cleaved when the second residue in the primary sequence is small and uncharged (Met-Ala-, Cys, Gly, Pro, Ser, Thr, or Val). This Pyrococcus horikoshii (strain ATCC 700860 / DSM 12428 / JCM 9974 / NBRC 100139 / OT-3) protein is Methionine aminopeptidase.